A 408-amino-acid polypeptide reads, in one-letter code: Flavohemoprotein (408 aa).

In terms of domain architecture, Globin spans M1–G138. Heme b is bound at residue H85. Catalysis depends on charge relay system residues Y95 and E137. A reductase region spans residues G149–V408. The FAD-binding FR-type domain occupies N152–D263. FAD-binding positions include Y190 and R205–S208. Residue G277–P282 coordinates NADP(+). F398–P401 serves as a coordination point for FAD.

This sequence belongs to the globin family. Two-domain flavohemoproteins subfamily. It in the C-terminal section; belongs to the flavoprotein pyridine nucleotide cytochrome reductase family. Heme b is required as a cofactor. It depends on FAD as a cofactor.

It carries out the reaction 2 nitric oxide + NADPH + 2 O2 = 2 nitrate + NADP(+) + H(+). The catalysed reaction is 2 nitric oxide + NADH + 2 O2 = 2 nitrate + NAD(+) + H(+). The polypeptide is Flavohemoprotein (Rhodopirellula baltica (strain DSM 10527 / NCIMB 13988 / SH1)).